Reading from the N-terminus, the 256-residue chain is MALAKRIIPCLDVDNGRVVKGVKFENIRDAGDPVEIARRYDEQGADEITFLDITASVDGRDTTLHTVERMASQVFIPLTVGGGVRTVQDIRNLLNAGADKVSINTAAVFNPEFVGEAAARFGSQCIVVAIDAKRVSAPGEPGRWEIFTHGGRKPTGLDAVEWARKMEGLGAGEILLTSMDQDGVKSGYDLGVTRAISEAVRVPVIASGGVGNLQHLADGILEGKADAVLAASIFHFGEYTVPEAKAYLASRGIVVR.

Active-site residues include aspartate 12 and aspartate 131.

Belongs to the HisA/HisF family. In terms of assembly, heterodimer of HisH and HisF.

The protein resides in the cytoplasm. It catalyses the reaction 5-[(5-phospho-1-deoxy-D-ribulos-1-ylimino)methylamino]-1-(5-phospho-beta-D-ribosyl)imidazole-4-carboxamide + L-glutamine = D-erythro-1-(imidazol-4-yl)glycerol 3-phosphate + 5-amino-1-(5-phospho-beta-D-ribosyl)imidazole-4-carboxamide + L-glutamate + H(+). It functions in the pathway amino-acid biosynthesis; L-histidine biosynthesis; L-histidine from 5-phospho-alpha-D-ribose 1-diphosphate: step 5/9. IGPS catalyzes the conversion of PRFAR and glutamine to IGP, AICAR and glutamate. The HisF subunit catalyzes the cyclization activity that produces IGP and AICAR from PRFAR using the ammonia provided by the HisH subunit. This chain is Imidazole glycerol phosphate synthase subunit HisF, found in Ectopseudomonas mendocina (strain ymp) (Pseudomonas mendocina).